The chain runs to 362 residues: tRNA/tmRNA (uracil-C(5))-methyltransferase (362 aa).

S-adenosyl-L-methionine-binding residues include Q182, Y210, N215, E231, and D293. The Nucleophile role is filled by C318. The active-site Proton acceptor is the E352.

This sequence belongs to the class I-like SAM-binding methyltransferase superfamily. RNA M5U methyltransferase family. TrmA subfamily.

The enzyme catalyses uridine(54) in tRNA + S-adenosyl-L-methionine = 5-methyluridine(54) in tRNA + S-adenosyl-L-homocysteine + H(+). It catalyses the reaction uridine(341) in tmRNA + S-adenosyl-L-methionine = 5-methyluridine(341) in tmRNA + S-adenosyl-L-homocysteine + H(+). In terms of biological role, dual-specificity methyltransferase that catalyzes the formation of 5-methyluridine at position 54 (m5U54) in all tRNAs, and that of position 341 (m5U341) in tmRNA (transfer-mRNA). This chain is tRNA/tmRNA (uracil-C(5))-methyltransferase, found in Neisseria gonorrhoeae (strain ATCC 700825 / FA 1090).